Here is a 394-residue protein sequence, read N- to C-terminus: Mannosyl-3-phosphoglycerate synthase (394 aa).

This sequence belongs to the glycosyltransferase 2 family. The cofactor is Mg(2+).

It is found in the cytoplasm. The catalysed reaction is (2R)-3-phosphoglycerate + GDP-alpha-D-mannose = 2-O-(alpha-D-mannosyl)-3-phosphoglycerate + GDP + H(+). It participates in carbohydrate biosynthesis; 2-(alpha-D-mannosyl)-D-glycerate biosynthesis; 2-(alpha-D-mannosyl)-D-glycerate from GDP-alpha-D-mannose (MPG route): step 1/2. Transfers a mannosyl group from GDP-mannose to phosphoglycerate to form mannosyl-3-phosphoglycerate (MPG). The enzyme is absolutely specific for GDP-mannose and 3-phosphoglycerate, and transfers the mannosyl group with retention of configuration. This chain is Mannosyl-3-phosphoglycerate synthase (mngA), found in Pyrococcus horikoshii (strain ATCC 700860 / DSM 12428 / JCM 9974 / NBRC 100139 / OT-3).